We begin with the raw amino-acid sequence, 849 residues long: Alanine--tRNA ligase (849 aa).

Zn(2+)-binding residues include His-551, His-555, Cys-653, and His-657.

The protein belongs to the class-II aminoacyl-tRNA synthetase family. Zn(2+) is required as a cofactor.

It is found in the cytoplasm. It catalyses the reaction tRNA(Ala) + L-alanine + ATP = L-alanyl-tRNA(Ala) + AMP + diphosphate. Functionally, catalyzes the attachment of alanine to tRNA(Ala) in a two-step reaction: alanine is first activated by ATP to form Ala-AMP and then transferred to the acceptor end of tRNA(Ala). Also edits incorrectly charged Ser-tRNA(Ala) and Gly-tRNA(Ala) via its editing domain. The protein is Alanine--tRNA ligase of Sulfurimonas denitrificans (strain ATCC 33889 / DSM 1251) (Thiomicrospira denitrificans (strain ATCC 33889 / DSM 1251)).